We begin with the raw amino-acid sequence, 407 residues long: BRCA1-A complex subunit Abraxas 1 (407 aa).

One can recognise an MPN domain in the interval 7 to 155; the sequence is LGVLSGFVLG…THCLEHALYK (149 aa). Position 48 is a phosphoserine (Ser-48). The stretch at 209-259 forms a coiled coil; sequence LKEVHKINEMYAAVQEELKSICQKVEQSEREVEKLLMDVNQLKEVRRTQQA. The segment at 344–407 is disordered; that stretch reads KRKALDTHDQ…DADYPRSPTF (64 aa). The span at 347–366 shows a compositional bias: basic and acidic residues; it reads ALDTHDQGSVKRPRLLETES. Ser-384, Ser-385, Ser-394, and Ser-404 each carry phosphoserine. The segment covering 388–399 has biased composition (acidic residues); it reads IDIEMGSPEDDA. A pSXXF motif motif is present at residues 404 to 407; sequence SPTF.

The protein belongs to the FAM175 family. Abraxas subfamily. In terms of assembly, component of the ARISC complex, at least composed of UIMC1/RAP80, ABRAXAS1, BRCC3/BRCC36, BABAM2 and BABAM1/NBA1. Component of the BRCA1-A complex, at least composed of the BRCA1, BARD1, UIMC1/RAP80, ABRAXAS1, BRCC3/BRCC36, BABAM2 and BABAM1/NBA1. In the complex, interacts directly with UIMC1/RAP80, BRCC3/BRCC36 and BABAM2. Homodimer. Interacts directly (when phosphorylated at Ser-404) with BRCA1. The phosphorylated homodimer can interact directly with two BRCA1 chains, giving rise to a heterotetramer. Binds polyubiquitin. In terms of processing, phosphorylation of Ser-404 of the pSXXF motif by ATM or ATR constitutes a specific recognition motif for the BRCT domain of BRCA1.

The protein resides in the nucleus. Its function is as follows. Involved in DNA damage response and double-strand break (DSB) repair. Component of the BRCA1-A complex, acting as a central scaffold protein that assembles the various components of the complex and mediates the recruitment of BRCA1. The BRCA1-A complex specifically recognizes 'Lys-63'-linked ubiquitinated histones H2A and H2AX at DNA lesion sites, leading to target the BRCA1-BARD1 heterodimer to sites of DNA damage at DSBs. This complex also possesses deubiquitinase activity that specifically removes 'Lys-63'-linked ubiquitin on histones H2A and H2AX. This chain is BRCA1-A complex subunit Abraxas 1, found in Mus musculus (Mouse).